The following is a 335-amino-acid chain: NADH-quinone oxidoreductase subunit H (335 aa).

Helical transmembrane passes span 11 to 31, 81 to 101, 114 to 134, 154 to 174, 187 to 207, 238 to 258, 270 to 290, and 307 to 327; these read VILTVLRAIVVLLAVVVCGAL, VIFTLAPVVAMSALLIAFVVI, IGLLFFFAMAGLSVYAVLFAG, VSYEVFLGLALMGVVVQVGSF, LWFIIPQFFGFCTFFIAGVAV, FFVGEYIGIILISALLVTLFF, QLSFLWFALKTAFFIMLFILL, and WKFCLPLTLINLLVTAAIVLY.

It belongs to the complex I subunit 1 family. As to quaternary structure, NDH-1 is composed of 13 different subunits. Subunits NuoA, H, J, K, L, M, N constitute the membrane sector of the complex.

The protein resides in the cell inner membrane. It catalyses the reaction a quinone + NADH + 5 H(+)(in) = a quinol + NAD(+) + 4 H(+)(out). In terms of biological role, NDH-1 shuttles electrons from NADH, via FMN and iron-sulfur (Fe-S) centers, to quinones in the respiratory chain. The immediate electron acceptor for the enzyme in this species is believed to be ubiquinone. Couples the redox reaction to proton translocation (for every two electrons transferred, four hydrogen ions are translocated across the cytoplasmic membrane), and thus conserves the redox energy in a proton gradient. This subunit may bind ubiquinone. The polypeptide is NADH-quinone oxidoreductase subunit H (Pseudomonas putida (strain ATCC 700007 / DSM 6899 / JCM 31910 / BCRC 17059 / LMG 24140 / F1)).